The sequence spans 327 residues: Malate dehydrogenase (327 aa).

12–18 (GAAGQIA) contributes to the NAD(+) binding site. The substrate site is built by arginine 93 and arginine 99. NAD(+)-binding positions include asparagine 106, glutamine 113, and 130-132 (VGN). Substrate-binding residues include asparagine 132 and arginine 163. Residue histidine 188 is the Proton acceptor of the active site.

It belongs to the LDH/MDH superfamily. MDH type 2 family.

The catalysed reaction is (S)-malate + NAD(+) = oxaloacetate + NADH + H(+). In terms of biological role, catalyzes the reversible oxidation of malate to oxaloacetate. The sequence is that of Malate dehydrogenase from Acidiphilium cryptum (strain JF-5).